The sequence spans 495 residues: UDP-N-acetylmuramoyl-L-alanyl-D-glutamate--2,6-diaminopimelate ligase (495 aa).

UDP-N-acetyl-alpha-D-muramoyl-L-alanyl-D-glutamate contacts are provided by residues L27, S29, and 44-46; that span reads HKA. 116-122 serves as a coordination point for ATP; the sequence is GTNGKTT. UDP-N-acetyl-alpha-D-muramoyl-L-alanyl-D-glutamate is bound by residues N157, 158–159, S185, Q191, and R193; that span reads TT. Position 225 is an N6-carboxylysine (K225). Residues R390, 414–417, G465, and E469 each bind meso-2,6-diaminopimelate; that span reads DNPR. A Meso-diaminopimelate recognition motif motif is present at residues 414–417; it reads DNPR.

This sequence belongs to the MurCDEF family. MurE subfamily. Mg(2+) is required as a cofactor. In terms of processing, carboxylation is probably crucial for Mg(2+) binding and, consequently, for the gamma-phosphate positioning of ATP.

Its subcellular location is the cytoplasm. It catalyses the reaction UDP-N-acetyl-alpha-D-muramoyl-L-alanyl-D-glutamate + meso-2,6-diaminopimelate + ATP = UDP-N-acetyl-alpha-D-muramoyl-L-alanyl-gamma-D-glutamyl-meso-2,6-diaminopimelate + ADP + phosphate + H(+). It functions in the pathway cell wall biogenesis; peptidoglycan biosynthesis. Catalyzes the addition of meso-diaminopimelic acid to the nucleotide precursor UDP-N-acetylmuramoyl-L-alanyl-D-glutamate (UMAG) in the biosynthesis of bacterial cell-wall peptidoglycan. The sequence is that of UDP-N-acetylmuramoyl-L-alanyl-D-glutamate--2,6-diaminopimelate ligase from Pectobacterium atrosepticum (strain SCRI 1043 / ATCC BAA-672) (Erwinia carotovora subsp. atroseptica).